Reading from the N-terminus, the 219-residue chain is Large ribosomal subunit protein uL3 (219 aa).

The segment at 136 to 156 is disordered; it reads GASHGAHRNHRKPGSIGGCAT.

Belongs to the universal ribosomal protein uL3 family. As to quaternary structure, part of the 50S ribosomal subunit. Forms a cluster with proteins L14 and L19.

In terms of biological role, one of the primary rRNA binding proteins, it binds directly near the 3'-end of the 23S rRNA, where it nucleates assembly of the 50S subunit. The sequence is that of Large ribosomal subunit protein uL3 from Kineococcus radiotolerans (strain ATCC BAA-149 / DSM 14245 / SRS30216).